The following is a 62-amino-acid chain: Protein A37.5 homolog (62 aa).

Belongs to the orthopoxviruses A37.5 protein family.

The chain is Protein A37.5 homolog (A40_5R) from Homo sapiens (Human).